The sequence spans 863 residues: Alanine--tRNA ligase (863 aa).

Zn(2+) is bound by residues His552, His556, Cys656, and His660.

Belongs to the class-II aminoacyl-tRNA synthetase family. Requires Zn(2+) as cofactor.

Its subcellular location is the cytoplasm. The enzyme catalyses tRNA(Ala) + L-alanine + ATP = L-alanyl-tRNA(Ala) + AMP + diphosphate. Functionally, catalyzes the attachment of alanine to tRNA(Ala) in a two-step reaction: alanine is first activated by ATP to form Ala-AMP and then transferred to the acceptor end of tRNA(Ala). Also edits incorrectly charged Ser-tRNA(Ala) and Gly-tRNA(Ala) via its editing domain. In Alcanivorax borkumensis (strain ATCC 700651 / DSM 11573 / NCIMB 13689 / SK2), this protein is Alanine--tRNA ligase.